The following is a 452-amino-acid chain: MQSIFGTDGIRGIFDKELTYSLAYKVGYALGVSTKTNNPILIGRDTRVSGYILIEAISRGINAAGKEFIYLGICPTPAIPFLIKKEKFSGGIMISASHNPPEYNGIKIFDNNGEKIKKKLENQIELILETANNLKLSTYKKTSIRENNNLFNIYTEGLINTMGDENLDGMKIVLDTCYGSATTCAASIFQKLGANVKVINNEQDGLKINLNCGSTCLDPIIKAIKENNADMGFSFDGDADRVIGVDSEGNIIDGDHILFLWGRELLEEKLLTNNTIISTKMANLGFENTWKKIGGILHRTEVGDKFIFEAIKKKKALLGGEQSGHILSKINDFCGDGILTAIQISKYCKKKNISLRSWLNSSFSPYPQKLTNVLLNFKFKNIDKSYKEFINETIESFSNIKKDNCRVYIRPSGTEPVLRILVEARNQQEVDSLSTKITAELSTKIYKISKTF.

Residue Ser-97 is the Phosphoserine intermediate of the active site. Mg(2+) is bound by residues Ser-97, Asp-236, Asp-238, and Asp-240. Ser-97 is modified (phosphoserine).

It belongs to the phosphohexose mutase family. Mg(2+) is required as a cofactor. Post-translationally, activated by phosphorylation.

It carries out the reaction alpha-D-glucosamine 1-phosphate = D-glucosamine 6-phosphate. Its function is as follows. Catalyzes the conversion of glucosamine-6-phosphate to glucosamine-1-phosphate. The chain is Phosphoglucosamine mutase from Prochlorococcus marinus subsp. pastoris (strain CCMP1986 / NIES-2087 / MED4).